The sequence spans 366 residues: Chorismate synthase (366 aa).

The NADP(+) site is built by R48 and R54. FMN is bound by residues 125-127 (RSS), 238-239 (NA), G278, 293-297 (KPTSS), and R319.

The protein belongs to the chorismate synthase family. As to quaternary structure, homotetramer. Requires FMNH2 as cofactor.

The catalysed reaction is 5-O-(1-carboxyvinyl)-3-phosphoshikimate = chorismate + phosphate. It functions in the pathway metabolic intermediate biosynthesis; chorismate biosynthesis; chorismate from D-erythrose 4-phosphate and phosphoenolpyruvate: step 7/7. Functionally, catalyzes the anti-1,4-elimination of the C-3 phosphate and the C-6 proR hydrogen from 5-enolpyruvylshikimate-3-phosphate (EPSP) to yield chorismate, which is the branch point compound that serves as the starting substrate for the three terminal pathways of aromatic amino acid biosynthesis. This reaction introduces a second double bond into the aromatic ring system. The sequence is that of Chorismate synthase from Burkholderia ambifaria (strain MC40-6).